We begin with the raw amino-acid sequence, 505 residues long: ATP synthase subunit alpha, chloroplastic (505 aa).

Gly170 to Thr177 serves as a coordination point for ATP.

This sequence belongs to the ATPase alpha/beta chains family. As to quaternary structure, F-type ATPases have 2 components, CF(1) - the catalytic core - and CF(0) - the membrane proton channel. CF(1) has five subunits: alpha(3), beta(3), gamma(1), delta(1), epsilon(1). CF(0) has four main subunits: a, b, b' and c.

The protein localises to the plastid. It is found in the chloroplast thylakoid membrane. The enzyme catalyses ATP + H2O + 4 H(+)(in) = ADP + phosphate + 5 H(+)(out). Its function is as follows. Produces ATP from ADP in the presence of a proton gradient across the membrane. The alpha chain is a regulatory subunit. In Zygnema circumcarinatum (Green alga), this protein is ATP synthase subunit alpha, chloroplastic.